The chain runs to 246 residues: Probable transcriptional regulatory protein ASA_2843 (246 aa).

The protein belongs to the TACO1 family.

The protein resides in the cytoplasm. The chain is Probable transcriptional regulatory protein ASA_2843 from Aeromonas salmonicida (strain A449).